Consider the following 567-residue polypeptide: MTNDHDIDIKPRSRDVTDGLERTAARGMLRAVGMGDDDWEKPQIGVASSWNEITPCNLTLKKLAGFAKEGVHEAGGYPLEFGTISVSDGISMGHEGMHYSLVSREVITDSVETVMSAERLDGSVLLAGCDKSIPGMLMAAARLNLSSVFLYNGSTMPGTAKMSDGTEREVTLIDAFEAVGACRAGTMSREDVDAIERSVCPGEGACGGMYTANTMASAAEAMGMSLPGSAAPPAIHQDRTLYARRSGEAVVELLRRGIRARDIITRESLLNAVAVVMALGGSTNAVLHLMAIAHEAEVDLTLEDFNAVGDKVPHLGDLKPFGRYVMNDVFKIGGIPVVMKALLDAGLINGDCLTITGRTVAENLQGINPPDPDGQILRAIDNPIHKTGGLTILHGSLAPGGAVVKTAGFDTERFEGTARVFNQEAPAMDAVLNGELKAGDVVIIRYEGPKGGPGMREMLAITGAIKGAGIGKEVLLITDGRFSGGSTGLCIGHVAPEAVDGGPIALVEDGDPILVDISQRRIDLLVDESILEERRKTLQHPENPRLHGVLGKYAKLVQSASMGAVCF.

Residue cysteine 56 coordinates [2Fe-2S] cluster. Position 88 (aspartate 88) interacts with Mg(2+). Cysteine 129 is a [2Fe-2S] cluster binding site. Aspartate 130 and lysine 131 together coordinate Mg(2+). Lysine 131 is subject to N6-carboxylysine. Residue cysteine 206 participates in [2Fe-2S] cluster binding. Glutamate 457 serves as a coordination point for Mg(2+). Serine 483 functions as the Proton acceptor in the catalytic mechanism.

Belongs to the IlvD/Edd family. Homodimer. [2Fe-2S] cluster is required as a cofactor. It depends on Mg(2+) as a cofactor.

The catalysed reaction is (2R)-2,3-dihydroxy-3-methylbutanoate = 3-methyl-2-oxobutanoate + H2O. It carries out the reaction (2R,3R)-2,3-dihydroxy-3-methylpentanoate = (S)-3-methyl-2-oxopentanoate + H2O. The protein operates within amino-acid biosynthesis; L-isoleucine biosynthesis; L-isoleucine from 2-oxobutanoate: step 3/4. It functions in the pathway amino-acid biosynthesis; L-valine biosynthesis; L-valine from pyruvate: step 3/4. In terms of biological role, functions in the biosynthesis of branched-chain amino acids. Catalyzes the dehydration of (2R,3R)-2,3-dihydroxy-3-methylpentanoate (2,3-dihydroxy-3-methylvalerate) into 2-oxo-3-methylpentanoate (2-oxo-3-methylvalerate) and of (2R)-2,3-dihydroxy-3-methylbutanoate (2,3-dihydroxyisovalerate) into 2-oxo-3-methylbutanoate (2-oxoisovalerate), the penultimate precursor to L-isoleucine and L-valine, respectively. The chain is Dihydroxy-acid dehydratase 2 from Corynebacterium efficiens (strain DSM 44549 / YS-314 / AJ 12310 / JCM 11189 / NBRC 100395).